A 1224-amino-acid chain; its full sequence is MKVVKDMIPTKPHDVIWTDAQWQSIYAKGQDILVAAAAGSGKTAVLVERIIQRILRDDVDVDRLLVVTFTNLSAREMKHRVDKRIQEASFKDPNNEHLKNQRIKIHQAQISTLHSFCLKLIQQHYDVLDIDPHFRTSSEAENILLLEQTIDDVLEQHYDKLDPHFIELTEQLSSDRNDDQFRSIIKQLYFFSIANPQPFEWLNQLAQPYKEENKQQQLMQLINDLAMIFMKAGYEELQKSYDLFSMMESVDKQLEVIETERMFITKAIEGKVLNTDVITQHEFMSRFPAINSKIKEANEGMEDALNEAKQHYDKYKSLVMKVKNDYFSRNAEDLQRDMQQLAPRVAYLAQIVQDVIQSFGVQKRSRNILDFSDYEHFALCILTNEDGSPSRIAETYREHFKEILVDEYQDTNRVQEKILSCIKTGEEHDGNLFMVGDVKQSIYKFRQADPSLFIEKYNRFSSSGNESGLRIDLSQNFRSRQEVLSTTNYLFKHMMDEQVGEISYDDAAQLYFGAPYDEVSHPVQLRALVEASSENSDLTGSEQEANYIVEQVKDIINHQNVYDMKTGQYRKATYKDIVILERSFGQARNLQQAFKNNDIPFHVNSKEGYFEQTEVRLVLSFLRTIDNPLQDIYLVGLMRSVIYQFTEEELAEIRVVSPHDDYFYQSIKNYMIDEKADSRLVDKLNRFIQDIQKYQNYSQSQPVYQLIDKFYNDHFVIQYFSGLIGGKGRRANLYGLFNKAVEFENSSFRGLFQFIRFIDELIDRKKDFGEENVVGPNDNVVRMMTIHSSKGLEFPFVIYSGLSKKFNKGDLNAPVILNQQYGLGMDYFDVNKDMAFPSLASVAYRAINEKELISEEMRLIYVALTRAKEQLILVGRVKDEKSLIKYEQLAVSDTHIAVNERLTATNPFVLIYGVLAKHQSPSLPNDQRFERDIDQLNSEVKPRVSIVIDHYEDVSTEEVVNDNEIRTIEELKAINTGNEDVKIKIHQQLSYDYPFKVNTMKPSKQSVSELKRQLETEESNTNYDRVRQYRIGVASYERPKFLTQTKKRKANEIGTLMHTVMQHLPFREQRLTKDELFQYIDRLIDKQLIDEDAKEDIRIDEIMHFIDGPLYMEIAQADNVYTELPFVVNQIKVDGLTSEDEDVSIIQGMIDLIYESDGQFYFVDYKTDAFNRRKGMSDEEIGNQLKEKYQIQMTYYRNTLETILKRPVKGYLYFFKFGTLEIDD.

One can recognise a UvrD-like helicase ATP-binding domain in the interval 15-480 (VIWTDAQWQS…IDLSQNFRSR (466 aa)). Residue 36–43 (AAAGSGKT) coordinates ATP. The UvrD-like helicase C-terminal domain maps to 497–791 (EQVGEISYDD…RMMTIHSSKG (295 aa)).

It belongs to the helicase family. AddA subfamily. Heterodimer of AddA and AddB/RexB. It depends on Mg(2+) as a cofactor.

It carries out the reaction Couples ATP hydrolysis with the unwinding of duplex DNA by translocating in the 3'-5' direction.. The enzyme catalyses ATP + H2O = ADP + phosphate + H(+). Functionally, the heterodimer acts as both an ATP-dependent DNA helicase and an ATP-dependent, dual-direction single-stranded exonuclease. Recognizes the chi site generating a DNA molecule suitable for the initiation of homologous recombination. The AddA nuclease domain is required for chi fragment generation; this subunit has the helicase and 3' -&gt; 5' nuclease activities. The polypeptide is ATP-dependent helicase/nuclease subunit A (Staphylococcus epidermidis (strain ATCC 12228 / FDA PCI 1200)).